The sequence spans 424 residues: Otefin (424 aa).

The LEM domain maps to 1 to 30 (MADVDDFDSLSNAELRAKMLAQGLPNIPVT). A required for binding to Med and germline stem cell maintenance region spans residues 1-50 (MADVDDFDSLSNAELRAKMLAQGLPNIPVTDSSRKVLVKRLRASIGGQAS). Residues 42–186 (RASIGGQASP…SSKRADREEN (145 aa)) are disordered. Serine 44, serine 50, and serine 54 each carry phosphoserine. Threonine 63 carries the phosphothreonine modification. Residues 65 to 80 (APAPGAPSAPAAASTP) show a composition bias toward low complexity. Residues 92–99 (ATKARRTI) carry the Nuclear localization signal motif. Positions 103–133 (EAKEPVRRLPEEAIRRRPDEADRLRSEEPVA) are enriched in basic and acidic residues. Phosphoserine is present on serine 152. Basic and acidic residues predominate over residues 157-170 (SERKVVEPLRKPET). 2 positions are modified to phosphoserine: serine 192 and serine 198. A disordered region spans residues 259–278 (PSVPSARAQTTSSTRSYDYA). The span at 262 to 274 (PSARAQTTSSTRS) shows a compositional bias: low complexity. Residues 271 to 400 (STRSYDYASN…NRWLNSLEQK (130 aa)) are required for binding to Med. Residue serine 321 is modified to Phosphoserine. The residue at position 324 (threonine 324) is a Phosphothreonine. Serine 326 bears the Phosphoserine mark. Threonine 358 bears the Phosphothreonine mark. Phosphoserine is present on residues serine 378 and serine 385. Positions 400–424 (KYHIKSKLFIVLLVLLLIGVYYIFY) are essential for nuclear membrane localization and germline stem cell maintenance. The tract at residues 406-424 (KLFIVLLVLLLIGVYYIFY) is essential for nuclear membrane localization.

Interacts with Med. Interacts with Lam. Interacts with aurA, alphaTub84B, gammaTub23C and gammaTub37C. Interacts with Nemp. Phosphorylation at Thr-63 by aurA may be required for exit from mitosis. May be phosphorylated by Cdk1 and Pka-C1. Expressed in all cell types of the germarium and testis. Expressed in nurse cells, follicle cells and oocytes.

It localises to the nucleus inner membrane. The protein localises to the nucleus. Its subcellular location is the nucleoplasm. The protein resides in the cytoplasm. It is found in the chromosome. It localises to the cytoskeleton. The protein localises to the spindle pole. Its subcellular location is the microtubule organizing center. The protein resides in the centrosome. Inner nuclear membrane protein. Involved in the attachment of membrane vesicles to chromatin during nuclear assembly, and is probably required for centrosome maturation and cell cycle progression during mitosis. Essential for differentiation of certain tissues and the maintenance of progenitor cell populations. Required for the differentiation and maintenance of male and female germline stem cells (GSCs), as well as the maintenance of somatic cells in the GSC niche. This role is likely to be independent of the BMP (Dpp) pathway that negatively regulates bam transcription during GSC differentiation. During development, plays essential and redundant functions with the other LEM domain proteins; bocks and MAN1. Also has a redundant but important role with bocks during larval development. The protein is Otefin of Drosophila melanogaster (Fruit fly).